The chain runs to 89 residues: Small ribosomal subunit protein uS15 (89 aa).

Over residues 1 to 21 (MALTTEEKKQVLSEYGLHETD) the composition is skewed to basic and acidic residues. The disordered stretch occupies residues 1-24 (MALTTEEKKQVLSEYGLHETDTGS).

This sequence belongs to the universal ribosomal protein uS15 family. In terms of assembly, part of the 30S ribosomal subunit. Forms a bridge to the 50S subunit in the 70S ribosome, contacting the 23S rRNA.

In terms of biological role, one of the primary rRNA binding proteins, it binds directly to 16S rRNA where it helps nucleate assembly of the platform of the 30S subunit by binding and bridging several RNA helices of the 16S rRNA. Its function is as follows. Forms an intersubunit bridge (bridge B4) with the 23S rRNA of the 50S subunit in the ribosome. This Rhodococcus opacus (strain B4) protein is Small ribosomal subunit protein uS15.